The sequence spans 96 residues: Protein Vpr (96 aa).

Positions 1 to 42 (MEQAPEDQGPQREPYNDWTLELLEELKNEAVRHFPRIWLHSL) are homooligomerization. A phosphoserine; by host mark is found at serine 79, serine 94, and serine 96.

Belongs to the HIV-1 VPR protein family. In terms of assembly, homooligomer, may form homodimer. Interacts with p6-gag region of the Pr55 Gag precursor protein through a (Leu-X-X)4 motif near the C-terminus of the P6gag protein. Interacts with host UNG. May interact with host RAD23A/HHR23A. Interacts with host VPRBP/DCAF1, leading to hijack the CUL4A-RBX1-DDB1-DCAF1/VPRBP complex, mediating ubiquitination of host proteins such as TERT and ZGPAT and arrest of the cell cycle in G2 phase. In terms of processing, phosphorylated on several residues by host. These phosphorylations regulate VPR activity for the nuclear import of the HIV-1 pre-integration complex.

It is found in the virion. It localises to the host nucleus. The protein resides in the host extracellular space. In terms of biological role, during virus replication, may deplete host UNG protein, and incude G2-M cell cycle arrest. Acts by targeting specific host proteins for degradation by the 26S proteasome, through association with the cellular CUL4A-DDB1 E3 ligase complex by direct interaction with host VPRPB/DCAF-1. Cell cycle arrest reportedly occurs within hours of infection and is not blocked by antiviral agents, suggesting that it is initiated by the VPR carried into the virion. Additionally, VPR induces apoptosis in a cell cycle dependent manner suggesting that these two effects are mechanistically linked. Detected in the serum and cerebrospinal fluid of AIDS patient, VPR may also induce cell death to bystander cells. During virus entry, plays a role in the transport of the viral pre-integration (PIC) complex to the host nucleus. This function is crucial for viral infection of non-dividing macrophages. May act directly at the nuclear pore complex, by binding nucleoporins phenylalanine-glycine (FG)-repeat regions. In Human immunodeficiency virus type 1 group M subtype B (strain 89.6) (HIV-1), this protein is Protein Vpr.